Consider the following 116-residue polypeptide: Probable early E4 11 kDa protein (116 aa).

This is Probable early E4 11 kDa protein from Human adenovirus A serotype 12 (HAdV-12).